Consider the following 313-residue polypeptide: Porphobilinogen deaminase (313 aa).

C242 bears the S-(dipyrrolylmethanemethyl)cysteine mark.

This sequence belongs to the HMBS family. In terms of assembly, monomer. Dipyrromethane is required as a cofactor.

It carries out the reaction 4 porphobilinogen + H2O = hydroxymethylbilane + 4 NH4(+). It functions in the pathway porphyrin-containing compound metabolism; protoporphyrin-IX biosynthesis; coproporphyrinogen-III from 5-aminolevulinate: step 2/4. Its function is as follows. Tetrapolymerization of the monopyrrole PBG into the hydroxymethylbilane pre-uroporphyrinogen in several discrete steps. The polypeptide is Porphobilinogen deaminase (Pseudomonas fluorescens (strain Pf0-1)).